A 438-amino-acid polypeptide reads, in one-letter code: Argininosuccinate lyase (438 aa).

It belongs to the lyase 1 family. Argininosuccinate lyase subfamily.

The protein resides in the cytoplasm. It catalyses the reaction 2-(N(omega)-L-arginino)succinate = fumarate + L-arginine. It functions in the pathway amino-acid biosynthesis; L-arginine biosynthesis; L-arginine from L-ornithine and carbamoyl phosphate: step 3/3. The sequence is that of Argininosuccinate lyase from Clostridioides difficile (strain 630) (Peptoclostridium difficile).